The primary structure comprises 362 residues: Phosphoserine aminotransferase (362 aa).

2 residues coordinate L-glutamate: Ser-9 and Arg-42. Residues 76 to 77 (GR), Trp-102, Thr-153, Asp-174, and Gln-197 each bind pyridoxal 5'-phosphate. N6-(pyridoxal phosphate)lysine is present on Lys-198. 239-240 (NT) is a pyridoxal 5'-phosphate binding site.

The protein belongs to the class-V pyridoxal-phosphate-dependent aminotransferase family. SerC subfamily. Homodimer. Pyridoxal 5'-phosphate serves as cofactor.

It is found in the cytoplasm. It catalyses the reaction O-phospho-L-serine + 2-oxoglutarate = 3-phosphooxypyruvate + L-glutamate. The catalysed reaction is 4-(phosphooxy)-L-threonine + 2-oxoglutarate = (R)-3-hydroxy-2-oxo-4-phosphooxybutanoate + L-glutamate. Its pathway is amino-acid biosynthesis; L-serine biosynthesis; L-serine from 3-phospho-D-glycerate: step 2/3. It functions in the pathway cofactor biosynthesis; pyridoxine 5'-phosphate biosynthesis; pyridoxine 5'-phosphate from D-erythrose 4-phosphate: step 3/5. In terms of biological role, catalyzes the reversible conversion of 3-phosphohydroxypyruvate to phosphoserine and of 3-hydroxy-2-oxo-4-phosphonooxybutanoate to phosphohydroxythreonine. Is involved in both pyridoxine and serine biosynthesis. This is Phosphoserine aminotransferase (serC) from Escherichia coli (strain K12).